The sequence spans 115 residues: U3-lycotoxin-Ls1b (115 aa).

Residues 1–20 (MKFVLLFGVLLVTLFSYSSA) form the signal peptide. Positions 21–44 (EMLDDFDQADEDELLSLIEKEEAR) are excised as a propeptide. Disulfide bonds link Cys-48–Cys-63, Cys-55–Cys-72, Cys-62–Cys-87, and Cys-74–Cys-85.

The protein belongs to the neurotoxin 19 (CSTX) family. 01 subfamily. As to expression, expressed by the venom gland.

The protein resides in the secreted. In Lycosa singoriensis (Wolf spider), this protein is U3-lycotoxin-Ls1b.